The sequence spans 253 residues: Small ribosomal subunit protein uS2 (253 aa).

Ser2 is subject to N-acetylserine. A disordered region spans residues 212–253 (QQAAEEAAAGEEDDEAKEEVAAEEQTEAADWAEGQSEEVASW). Over residues 219-238 (AAGEEDDEAKEEVAAEEQTE) the composition is skewed to acidic residues.

Belongs to the universal ribosomal protein uS2 family. In terms of assembly, component of the small ribosomal subunit. Mature ribosomes consist of a small (40S) and a large (60S) subunit. The 40S subunit contains about 33 different proteins and 1 molecule of RNA (18S). The 60S subunit contains about 49 different proteins and 3 molecules of RNA (25S, 5.8S and 5S). Interacts with RPS21.

It is found in the cytoplasm. Required for the assembly and/or stability of the 40S ribosomal subunit. Required for the processing of the 20S rRNA-precursor to mature 18S rRNA in a late step of the maturation of 40S ribosomal subunits. This is Small ribosomal subunit protein uS2 from Eremothecium gossypii (strain ATCC 10895 / CBS 109.51 / FGSC 9923 / NRRL Y-1056) (Yeast).